A 166-amino-acid chain; its full sequence is Phosphopantetheine adenylyltransferase (166 aa).

Ser-11 provides a ligand contact to substrate. ATP contacts are provided by residues 11–12 (SF) and His-19. Residues Lys-43, Ala-76, and Arg-90 each coordinate substrate. Residues 91-93 (GLR), Glu-101, and 126-132 (LQPISSS) each bind ATP.

This sequence belongs to the bacterial CoaD family. In terms of assembly, homohexamer. Mg(2+) serves as cofactor.

Its subcellular location is the cytoplasm. The catalysed reaction is (R)-4'-phosphopantetheine + ATP + H(+) = 3'-dephospho-CoA + diphosphate. Its pathway is cofactor biosynthesis; coenzyme A biosynthesis; CoA from (R)-pantothenate: step 4/5. Its function is as follows. Reversibly transfers an adenylyl group from ATP to 4'-phosphopantetheine, yielding dephospho-CoA (dPCoA) and pyrophosphate. This is Phosphopantetheine adenylyltransferase from Streptococcus equi subsp. zooepidemicus (strain MGCS10565).